Here is a 102-residue protein sequence, read N- to C-terminus: Large ribosomal subunit protein bL21 (102 aa).

The protein belongs to the bacterial ribosomal protein bL21 family. Part of the 50S ribosomal subunit. Contacts protein L20.

Functionally, this protein binds to 23S rRNA in the presence of protein L20. This chain is Large ribosomal subunit protein bL21, found in Campylobacter jejuni subsp. doylei (strain ATCC BAA-1458 / RM4099 / 269.97).